Here is an 85-residue protein sequence, read N- to C-terminus: Large ribosomal subunit protein bL27 (85 aa).

The tract at residues 1 to 22 (MAHKKAGGSTKNGRDSESKRLG) is disordered.

This sequence belongs to the bacterial ribosomal protein bL27 family.

This is Large ribosomal subunit protein bL27 from Idiomarina loihiensis (strain ATCC BAA-735 / DSM 15497 / L2-TR).